Reading from the N-terminus, the 142-residue chain is Peptide methionine sulfoxide reductase MsrB (142 aa).

The MsrB domain maps to 2–125; sequence IKKNKEELND…NSAAIQFIPY (124 aa). The active-site Nucleophile is C114.

This sequence belongs to the MsrB Met sulfoxide reductase family.

It carries out the reaction L-methionyl-[protein] + [thioredoxin]-disulfide + H2O = L-methionyl-(R)-S-oxide-[protein] + [thioredoxin]-dithiol. This chain is Peptide methionine sulfoxide reductase MsrB, found in Staphylococcus epidermidis (strain ATCC 35984 / DSM 28319 / BCRC 17069 / CCUG 31568 / BM 3577 / RP62A).